Reading from the N-terminus, the 576-residue chain is D-lactate dehydrogenase [cytochrome], mitochondrial (576 aa).

The FAD-binding PCMH-type domain maps to 139-320 (EANQRPEIVL…TEATIKCHVR (182 aa)).

The protein belongs to the FAD-binding oxidoreductase/transferase type 4 family. FAD is required as a cofactor. Requires Zn(2+) as cofactor.

The protein resides in the mitochondrion matrix. The enzyme catalyses (R)-lactate + 2 Fe(III)-[cytochrome c] = 2 Fe(II)-[cytochrome c] + pyruvate + 2 H(+). Catalyzes the stereospecific oxidation of D-lactate to pyruvate. In Kluyveromyces lactis (strain ATCC 8585 / CBS 2359 / DSM 70799 / NBRC 1267 / NRRL Y-1140 / WM37) (Yeast), this protein is D-lactate dehydrogenase [cytochrome], mitochondrial (DLD1).